Here is a 239-residue protein sequence, read N- to C-terminus: Uridylate kinase (239 aa).

10 to 13 is an ATP binding site; sequence KFSG. The segment at 18 to 23 is involved in allosteric activation by GTP; it reads GENGFG. Glycine 52 lines the UMP pocket. ATP is bound by residues glycine 53 and arginine 57. UMP is bound by residues aspartate 73 and 134 to 141; that span reads TGNPYFTT. The ATP site is built by threonine 161, tyrosine 167, and aspartate 170.

The protein belongs to the UMP kinase family. Homohexamer.

The protein localises to the cytoplasm. It catalyses the reaction UMP + ATP = UDP + ADP. The protein operates within pyrimidine metabolism; CTP biosynthesis via de novo pathway; UDP from UMP (UMPK route): step 1/1. Its activity is regulated as follows. Allosterically activated by GTP. Inhibited by UTP. Its function is as follows. Catalyzes the reversible phosphorylation of UMP to UDP. This Campylobacter jejuni subsp. jejuni serotype O:2 (strain ATCC 700819 / NCTC 11168) protein is Uridylate kinase.